Consider the following 74-residue polypeptide: Alpha-conotoxin GeXIVA (74 aa).

The signal sequence occupies residues 1-22; the sequence is MKLTCVLIITVLFLTACQLTTA. A propeptide spanning residues 23-46 is cleaved from the precursor; the sequence is VTYSRGEHKHRALMSTGTNYRLPK. The interacts with alpha-9-alpha-10 (CHRNA9-CHRNA10) nAChR stretch occupies residues 56–64; it reads RSPYDRRRR.

The protein belongs to the conotoxin O1 superfamily. The native disulfide bond pairing has not been studied. Three isomers may exist: the bead isomer (I-II; III-IV), the globular isomer (I-III; II-IV), the ribbon isomer (I-IV; II-III). They have all been synthesized and their activity tested. All of them show similar potency on alpha-9-alpha-10 (CHRNA9-CHRNA10) nAChR, showing that disulfide bonds does not significantly affect their activity. In addition, removal of disulfide bonds does not affect the activity on alpha-9-alpha-10 (CHRNA9-CHRNA10) nAChR either. As to expression, expressed by the venom duct.

It is found in the secreted. Its function is as follows. Alpha-conotoxins act on postsynaptic membranes, they bind to the nicotinic acetylcholine receptors (nAChR) and thus inhibit them. This toxin is very potent on alpha-9-alpha-10/CHRNA9-CHRNA10 nAChR (IC(50)=4.61-12 nM for the bead isomer (I-II; III-IV), IC(50)=7-16 nM for the ribbon isomer (I-IV; II-III) and IC(50)=22.7 nM for the globular isomer (I-III; II-IV)). The bead isomer also shows a weak inhibition on other nAChRs (alpha-1-beta-1-delta-epsilon/CHRNA1-CHRNB1-CHRND-CHRNE, alpha-7/CHRNA7, alpha-6/alpha-3-beta-2-beta-3 (CHRNA6/CHRNA3-CHRNB2-CHRNB3), alpha-3-beta-2/CHRNA3-CHRNB2, alpha-2-beta-2/CHRNA2-CHRNB2, alpha-6/alpha-3-beta-4 (CHRNA6/CHRNA3-CHRNB4), alpha-4-beta-2/CHRNA4-CHRNB2, alpha-4-beta-4/CHRNA4-CHRNB4, alpha-2-beta-4/CHRNA2-CHRNB4, alpha-3-beta-4/CHRNA3-CHRNB4). The toxin blockade is voltage-dependent, and its binding site does not overlap with the binding site of the competitive antagonist alpha-conotoxin RgIA. The toxin inhibits Sf9 cell growth. Both the bead and ribbon isomers relieve pain effects in the rat chronic constriction injury (CCI) model of neuropathic pain, and in the acute pain model of tail flick test, but have no effect on motor performance. The sequence is that of Alpha-conotoxin GeXIVA from Conus generalis (General cone).